The chain runs to 94 residues: uncharacterized protein (94 aa).

This is an uncharacterized protein from Schizosaccharomyces pombe (strain 972 / ATCC 24843) (Fission yeast).